The primary structure comprises 312 residues: Atrochrysone carboxyl ACP thioesterase AacuM (312 aa).

4 residues coordinate Zn(2+): H103, H105, D107, and H108. The active-site Proton donor/acceptor is D107.

This sequence belongs to the metallo-beta-lactamase superfamily. Requires Zn(2+) as cofactor.

It carries out the reaction atrochrysone carboxyl-[ACP] + H2O = atrochrysone carboxylate + holo-[ACP] + H(+). It functions in the pathway secondary metabolite biosynthesis. Functionally, atrochrysone carboxyl ACP thioesterase; part of the gene cluster that mediates the biosynthesis of the tetrahydroxanthone dimer secalonic acid D. The pathway begins with the synthesis of atrochrysone thioester by the polyketide synthase AacuL. The atrochrysone carboxyl ACP thioesterase AacuM then breaks the thioester bond and releases the atrochrysone carboxylic acid from AacuL. Atrochrysone carboxylic acid is decarboxylated by the decarboxylase AacuI, and oxidized by the anthrone oxygenase AacuG to yield emodin. Emodin is then reduced to emodin hydroquinone by a yet unidentified oxidoreductase. A-ring reduction by the short chain dehydrogenase AacuN, dehydration by the scytalone dehydratase-like protein AacuK and probable spontaneous re-oxidation, results in overall deoxygenation to chrysophanol. Baeyer-Villiger oxidation by the Baeyer-Villiger monooxygenase (BVMO) AacuH then yields monodictyphenone. Monodictyphenone is transformed into compounds with the tetrahydroxanthone skeleton via methylesterification by the methyltransferase AacuQ, followed by the action of the flavin-dependent monooxygenase AacuC, the isomerase AacuP, and the short chain dehydrogenase/reductase AacuF or AacuD. AacuF and AacuD should accept the same compound as a substrate but perform the ketoreduction with a different stereoselectivity, thus yielding blennolides B and A, respectively. In the final step of the biosynthesis, the cytochrome P450 monooxygenase AacuE accepts blennolide B and/or blennolide A to conduct the dimerization reaction to furnish the tetrahydroxanthone dimers, secalonic acids D, B, and F. The polypeptide is Atrochrysone carboxyl ACP thioesterase AacuM (Aspergillus aculeatus (strain ATCC 16872 / CBS 172.66 / WB 5094)).